The following is a 143-amino-acid chain: Insulin-like growth factor 1 (143 aa).

The signal sequence occupies residues 1–32 (MITPTVKMRILSSSHLFYLALCLLTFTSSATA). The b stretch occupies residues 33–61 (GPETLCGAELVDALQFVCGDRGFYFNKPT). Disulfide bonds link Cys38–Cys80, Cys50–Cys93, and Cys79–Cys84. The tract at residues 62–73 (GYGSSSRRAPQT) is c. Residues 74 to 94 (GIVDECCFRSCDLRRLEMYCA) form an a region. The tract at residues 95–102 (PLKPAKAA) is d. Residues 99-143 (AKAARSVRAQRHTDMPKTQKYQPPSTNKKMKSQRRRKGSTFEEHK) are disordered. A propeptide spans 103-143 (RSVRAQRHTDMPKTQKYQPPSTNKKMKSQRRRKGSTFEEHK) (e peptide). The segment covering 126–136 (KKMKSQRRRKG) has biased composition (basic residues).

The protein belongs to the insulin family. Forms a ternary complex with IGFR1 and ITGAV:ITGB3. Forms a ternary complex with IGFR1 and ITGA6:ITGB4. Forms a ternary complex with IGFBP3 and ALS.

It is found in the secreted. In terms of biological role, the insulin-like growth factors, isolated from plasma, are structurally and functionally related to insulin but have a much higher growth-promoting activity. May be a physiological regulator of [1-14C]-2-deoxy-D-glucose (2DG) transport and glycogen synthesis in osteoblasts. Stimulates glucose transport in bone-derived osteoblastic (PyMS) cells and is effective at much lower concentrations than insulin, not only regarding glycogen and DNA synthesis but also with regard to enhancing glucose uptake. May play a role in synapse maturation. Ca(2+)-dependent exocytosis of IGF1 is required for sensory perception of smell in the olfactory bulb. Acts as a ligand for IGF1R. Binds to the alpha subunit of IGF1R, leading to the activation of the intrinsic tyrosine kinase activity which autophosphorylates tyrosine residues in the beta subunit thus initiating a cascade of down-stream signaling events leading to activation of the PI3K-AKT/PKB and the Ras-MAPK pathways. Binds to integrins ITGAV:ITGB3 and ITGA6:ITGB4. Its binding to integrins and subsequent ternary complex formation with integrins and IGFR1 are essential for IGF1 signaling. Induces the phosphorylation and activation of IGFR1, MAPK3/ERK1, MAPK1/ERK2 and AKT1. As part of the MAPK/ERK signaling pathway, acts as a negative regulator of apoptosis in cardiomyocytes via promotion of STUB1/CHIP-mediated ubiquitination and degradation of ICER-type isoforms of CREM. This is Insulin-like growth factor 1 from Oryctolagus cuniculus (Rabbit).